Consider the following 52-residue polypeptide: uncharacterized protein (52 aa).

This is an uncharacterized protein from Caenorhabditis elegans.